A 157-amino-acid chain; its full sequence is Regulatory protein RecX (157 aa).

It belongs to the RecX family.

Its subcellular location is the cytoplasm. Its function is as follows. Modulates RecA activity. This is Regulatory protein RecX from Leptothrix cholodnii (strain ATCC 51168 / LMG 8142 / SP-6) (Leptothrix discophora (strain SP-6)).